We begin with the raw amino-acid sequence, 261 residues long: Cytochrome c oxidase subunit 3 (261 aa).

Residues 1–15 (MAHQAHAYHMVDPSP) lie on the Mitochondrial matrix side of the membrane. Residues 16–34 (WPLTGAVAALLLTSGLAIW) form a helical membrane-spanning segment. Over 35 to 40 (FPFNSL) the chain is Mitochondrial intermembrane. A helical membrane pass occupies residues 41–66 (ILLTLGLVLLLLTMYQWWRDIVREGT). Residues 67–72 (FQGHHT) are Mitochondrial matrix-facing. A helical transmembrane segment spans residues 73-105 (PPVQKGLRYGMILFITSEVFFFLGFFWAFYHSS). Residues 106–128 (LAPTPELGGCWPPTGIVPLNPFE) are Mitochondrial intermembrane-facing. The helical transmembrane segment at 129–152 (VPLLNTAVLLASGVTVTWAHHSIM) threads the bilayer. Topologically, residues 153 to 155 (EGE) are mitochondrial matrix. Residues 156 to 183 (RKQAIHSLTLTILLGFYFTFLQAMEYYE) traverse the membrane as a helical segment. Over 184-190 (APFTIAD) the chain is Mitochondrial intermembrane. The helical transmembrane segment at 191–223 (GVYGSTFFVATGFHGLHVIIGSTFLAICLLRQI) threads the bilayer. Over 224–232 (RYHFTSEHH) the chain is Mitochondrial matrix. The helical transmembrane segment at 233-256 (FGFEAAAWYWHFVDVVWLFLYISI) threads the bilayer. The Mitochondrial intermembrane portion of the chain corresponds to 257-261 (YWWGS).

The protein belongs to the cytochrome c oxidase subunit 3 family. Component of the cytochrome c oxidase (complex IV, CIV), a multisubunit enzyme composed of 14 subunits. The complex is composed of a catalytic core of 3 subunits MT-CO1, MT-CO2 and MT-CO3, encoded in the mitochondrial DNA, and 11 supernumerary subunits COX4I, COX5A, COX5B, COX6A, COX6B, COX6C, COX7A, COX7B, COX7C, COX8 and NDUFA4, which are encoded in the nuclear genome. The complex exists as a monomer or a dimer and forms supercomplexes (SCs) in the inner mitochondrial membrane with NADH-ubiquinone oxidoreductase (complex I, CI) and ubiquinol-cytochrome c oxidoreductase (cytochrome b-c1 complex, complex III, CIII), resulting in different assemblies (supercomplex SCI(1)III(2)IV(1) and megacomplex MCI(2)III(2)IV(2)).

The protein resides in the mitochondrion inner membrane. The enzyme catalyses 4 Fe(II)-[cytochrome c] + O2 + 8 H(+)(in) = 4 Fe(III)-[cytochrome c] + 2 H2O + 4 H(+)(out). Component of the cytochrome c oxidase, the last enzyme in the mitochondrial electron transport chain which drives oxidative phosphorylation. The respiratory chain contains 3 multisubunit complexes succinate dehydrogenase (complex II, CII), ubiquinol-cytochrome c oxidoreductase (cytochrome b-c1 complex, complex III, CIII) and cytochrome c oxidase (complex IV, CIV), that cooperate to transfer electrons derived from NADH and succinate to molecular oxygen, creating an electrochemical gradient over the inner membrane that drives transmembrane transport and the ATP synthase. Cytochrome c oxidase is the component of the respiratory chain that catalyzes the reduction of oxygen to water. Electrons originating from reduced cytochrome c in the intermembrane space (IMS) are transferred via the dinuclear copper A center (CU(A)) of subunit 2 and heme A of subunit 1 to the active site in subunit 1, a binuclear center (BNC) formed by heme A3 and copper B (CU(B)). The BNC reduces molecular oxygen to 2 water molecules using 4 electrons from cytochrome c in the IMS and 4 protons from the mitochondrial matrix. This Tetraodon nigroviridis (Spotted green pufferfish) protein is Cytochrome c oxidase subunit 3 (mt-co3).